The chain runs to 887 residues: DNA gyrase subunit A (887 aa).

In terms of domain architecture, Topo IIA-type catalytic spans leucine 35–leucine 501. Tyrosine 123 functions as the O-(5'-phospho-DNA)-tyrosine intermediate in the catalytic mechanism. The short motif at glutamine 528–glycine 534 is the GyrA-box element. Residues lysine 811–arginine 865 are disordered. Residues aspartate 813–glutamine 823 show a composition bias toward acidic residues.

Belongs to the type II topoisomerase GyrA/ParC subunit family. In terms of assembly, heterotetramer, composed of two GyrA and two GyrB chains. In the heterotetramer, GyrA contains the active site tyrosine that forms a transient covalent intermediate with DNA, while GyrB binds cofactors and catalyzes ATP hydrolysis.

The protein localises to the cytoplasm. It catalyses the reaction ATP-dependent breakage, passage and rejoining of double-stranded DNA.. Functionally, a type II topoisomerase that negatively supercoils closed circular double-stranded (ds) DNA in an ATP-dependent manner to modulate DNA topology and maintain chromosomes in an underwound state. Negative supercoiling favors strand separation, and DNA replication, transcription, recombination and repair, all of which involve strand separation. Also able to catalyze the interconversion of other topological isomers of dsDNA rings, including catenanes and knotted rings. Type II topoisomerases break and join 2 DNA strands simultaneously in an ATP-dependent manner. The chain is DNA gyrase subunit A from Staphylococcus aureus (strain MSSA476).